A 257-amino-acid chain; its full sequence is uncharacterized protein (257 aa).

An N-terminal signal peptide occupies residues 1–22; that stretch reads MIHSKRLKMCLCLIILSVFIGA. Cysteine 23 carries the N-palmitoyl cysteine lipid modification. Cysteine 23 is lipidated: S-diacylglycerol cysteine.

Belongs to the staphylococcal tandem lipoprotein family.

The protein resides in the cell membrane. This is an uncharacterized protein from Staphylococcus aureus (strain MRSA252).